The following is a 138-amino-acid chain: Nucleoside diphosphate kinase (138 aa).

ATP is bound by residues Lys-9, Phe-57, Arg-85, Thr-91, Arg-102, and Asn-112. The active-site Pros-phosphohistidine intermediate is the His-115.

It belongs to the NDK family. As to quaternary structure, homotetramer. It depends on Mg(2+) as a cofactor.

The protein localises to the cytoplasm. The enzyme catalyses a 2'-deoxyribonucleoside 5'-diphosphate + ATP = a 2'-deoxyribonucleoside 5'-triphosphate + ADP. The catalysed reaction is a ribonucleoside 5'-diphosphate + ATP = a ribonucleoside 5'-triphosphate + ADP. Functionally, major role in the synthesis of nucleoside triphosphates other than ATP. The ATP gamma phosphate is transferred to the NDP beta phosphate via a ping-pong mechanism, using a phosphorylated active-site intermediate. The sequence is that of Nucleoside diphosphate kinase from Exiguobacterium sibiricum (strain DSM 17290 / CCUG 55495 / CIP 109462 / JCM 13490 / 255-15).